Here is a 258-residue protein sequence, read N- to C-terminus: Phosphate import ATP-binding protein PstB (258 aa).

Residues 5 to 247 (IDVSGLNAYY…ERIFSNPSVQ (243 aa)) enclose the ABC transporter domain. Residue 37–44 (GPSGCGKS) coordinates ATP.

The protein belongs to the ABC transporter superfamily. Phosphate importer (TC 3.A.1.7) family. In terms of assembly, the complex is composed of two ATP-binding proteins (PstB), two transmembrane proteins (PstC and PstA) and a solute-binding protein (PstS).

The protein localises to the cell membrane. The catalysed reaction is phosphate(out) + ATP + H2O = ADP + 2 phosphate(in) + H(+). Part of the ABC transporter complex PstSACB involved in phosphate import. Responsible for energy coupling to the transport system. In Streptomyces coelicolor (strain ATCC BAA-471 / A3(2) / M145), this protein is Phosphate import ATP-binding protein PstB.